Reading from the N-terminus, the 642-residue chain is MISYGEQLSSPAVSPPLVRAGLRGPMMHGATFAYVPSPQALHRIPGTSAYAFPSLSPVALTEHGCPYGEARERHEPLPAKLALEEEQKPESGWAQELRRTAMTLLKLPLMVTFLYLFVCSLDVLSSAFQLAGGKVAGDIFKDNAILANPVAGLVVGILVTVLVQSSSTATSIIVSMVSSGLLEVSSAIPIIMGSNIGTSVTNTIVALMQAGDRTDFRRAFAGATVHDCFNWLSVLVLLPLEAATGYLHHVTGLVVASFNIRGGRDAPDLLKTITEPFTKLIIQLDRSVITSIATGDESLRNHSLIRIWCHRDPVEASTSMARAETNISRTHGNATMEKCNHIFVDTQLPDLAVGLILLAGSLVLLCTCLILLVKMLNSLLKGQVAKVIQKVINTDLPAPFTWVTGYFAMVVGAAMTFIVQSSSVFTSAITPLVGLGVISIERAYPLTLGSNIGTTTTAILAALASPREKLSSSFQIALCHFFFNISGILLWYPLPCTRLPIRMAKALGKRTAKYRWFAVLYLLVCFLLLPSLVFGISMAGWRAMVGVGAPFGALLAFVVLINVLQSRSPGRLPKWLQTWDFLPHWMHSLQPLDHLITHATLCCSRSEPRSPQLPARVFLEELPPATPSPRLALPAHHNATRL.

Residues 1 to 106 lie on the Cytoplasmic side of the membrane; sequence MISYGEQLSS…LRRTAMTLLK (106 aa). A phosphoserine mark is found at Ser14 and Ser37. The helical transmembrane segment at 107–128 threads the bilayer; it reads LPLMVTFLYLFVCSLDVLSSAF. At 129–148 the chain is on the extracellular side; that stretch reads QLAGGKVAGDIFKDNAILAN. Residues 149 to 166 form a helical membrane-spanning segment; sequence PVAGLVVGILVTVLVQSS. At 167-168 the chain is on the cytoplasmic side; the sequence is ST. The chain crosses the membrane as a helical span at residues 169-188; that stretch reads ATSIIVSMVSSGLLEVSSAI. Topologically, residues 189–350 are extracellular; sequence PIIMGSNIGT…HIFVDTQLPD (162 aa). Cystine bridges form between Cys228/Cys525 and Cys309/Cys339. 3 N-linked (GlcNAc...) asparagine glycosylation sites follow: Asn301, Asn326, and Asn333. Residues 351–373 traverse the membrane as a helical segment; that stretch reads LAVGLILLAGSLVLLCTCLILLV. Residues 374-415 are Cytoplasmic-facing; that stretch reads KMLNSLLKGQVAKVIQKVINTDLPAPFTWVTGYFAMVVGAAM. A helical membrane pass occupies residues 416 to 439; sequence TFIVQSSSVFTSAITPLVGLGVIS. Residues 440–469 lie on the Extracellular side of the membrane; that stretch reads IERAYPLTLGSNIGTTTTAILAALASPREK. Residues 470 to 490 form a helical membrane-spanning segment; it reads LSSSFQIALCHFFFNISGILL. Topologically, residues 491–516 are cytoplasmic; it reads WYPLPCTRLPIRMAKALGKRTAKYRW. Thr511 carries the phosphothreonine; by PKC modification. The helical transmembrane segment at 517-537 threads the bilayer; sequence FAVLYLLVCFLLLPSLVFGIS. Topologically, residues 538–542 are extracellular; the sequence is MAGWR. A helical transmembrane segment spans residues 543-564; it reads AMVGVGAPFGALLAFVVLINVL. The Cytoplasmic segment spans residues 565-642; sequence QSRSPGRLPK…LPAHHNATRL (78 aa). Ser610 carries the post-translational modification Phosphoserine. Position 626 is a phosphothreonine (Thr626). Ser628 bears the Phosphoserine mark.

This sequence belongs to the SLC34A transporter family. Interacts via its C-terminal region with NHERF4. Interacts with NHERF1. Interacts with TMEM174; regulates SLC34A1 internalization by PTH and FGF23. In terms of tissue distribution, expressed in the kidney cortex.

It is found in the apical cell membrane. The protein localises to the cell membrane. The enzyme catalyses 3 Na(+)(out) + phosphate(out) = 3 Na(+)(in) + phosphate(in). Its activity is regulated as follows. Transport activity is significantly increased in response to dietary phosphate deprivation. Its function is as follows. Involved in actively transporting phosphate into cells via Na(+) cotransport in the renal brush border membrane. The cotransport has a Na(+):Pi stoichiometry of 3:1 and is electrogenic. This is Sodium-dependent phosphate transport protein 2A from Oryctolagus cuniculus (Rabbit).